The chain runs to 430 residues: Adenylosuccinate synthetase (430 aa).

Residues 12-18 (GDEGKGK) and 40-42 (GHT) each bind GTP. Asp13 acts as the Proton acceptor in catalysis. 2 residues coordinate Mg(2+): Asp13 and Gly40. Residues 13–16 (DEGK), 38–41 (NAGH), Thr129, Arg143, Gln224, Thr239, and Arg303 each bind IMP. Catalysis depends on His41, which acts as the Proton donor. Substrate is bound at residue 299–305 (TVSNRER). Residues Arg305, 331–333 (KLD), and 413–415 (STG) contribute to the GTP site.

It belongs to the adenylosuccinate synthetase family. As to quaternary structure, homodimer. Mg(2+) is required as a cofactor.

The protein resides in the cytoplasm. The enzyme catalyses IMP + L-aspartate + GTP = N(6)-(1,2-dicarboxyethyl)-AMP + GDP + phosphate + 2 H(+). Its pathway is purine metabolism; AMP biosynthesis via de novo pathway; AMP from IMP: step 1/2. Plays an important role in the de novo pathway of purine nucleotide biosynthesis. Catalyzes the first committed step in the biosynthesis of AMP from IMP. The protein is Adenylosuccinate synthetase of Ehrlichia ruminantium (strain Gardel).